Here is a 358-residue protein sequence, read N- to C-terminus: Protein ocs (358 aa).

Belongs to the lysopine/nopaline/octopine/opine/vitopine dehydrogenases family.

The catalysed reaction is D-octopine + NAD(+) + H2O = L-arginine + pyruvate + NADH + H(+). The enzyme catalyses D-lysopine + NADP(+) + H2O = L-lysine + pyruvate + NADPH + H(+). In terms of biological role, reductive condensation of pyruvate and arginine, lysine, histidine, or octopine to form octopine, lysopine, histopine, or octopinic acid, respectively. NADPH is the preferred cofactor, but NADH can also be used. This Agrobacterium vitis (Rhizobium vitis) protein is Protein ocs (ocs).